The sequence spans 154 residues: Myoglobin (154 aa).

The region spanning 2–148 is the Globin domain; it reads GLSDGEWQIV…FRNDIAAKYK (147 aa). S4 is modified (phosphoserine). H65 serves as a coordination point for nitrite. Residue H65 participates in O2 binding. Phosphothreonine is present on T68. H94 is a binding site for heme b.

It belongs to the globin family. As to quaternary structure, monomeric.

Its subcellular location is the cytoplasm. It localises to the sarcoplasm. It carries out the reaction Fe(III)-heme b-[protein] + nitric oxide + H2O = Fe(II)-heme b-[protein] + nitrite + 2 H(+). The enzyme catalyses H2O2 + AH2 = A + 2 H2O. Its function is as follows. Monomeric heme protein which primary function is to store oxygen and facilitate its diffusion within muscle tissues. Reversibly binds oxygen through a pentacoordinated heme iron and enables its timely and efficient release as needed during periods of heightened demand. Depending on the oxidative conditions of tissues and cells, and in addition to its ability to bind oxygen, it also has a nitrite reductase activity whereby it regulates the production of bioactive nitric oxide. Under stress conditions, like hypoxia and anoxia, it also protects cells against reactive oxygen species thanks to its pseudoperoxidase activity. This Canis lupus familiaris (Dog) protein is Myoglobin (MB).